The primary structure comprises 387 residues: MRVAMLTREYPPEVYGGAGVHVTELVAYLRRLCAVDVHCMGAPRPGAFAYRPDPRLGSANAALSTLSADLVMANAASAATVVHSHTWYTALAGHLAAILYDIPHVLTAHSLEPLRPWKKEQLGGGYQVSTWVEQTAVLAANAVIAVSSAMRNDMLRVYPSLDPNLVHVIRNGIDTETWYPAGPARTGSVLAELGVDPNRPMAVFVGRITRQKGVVHLVTAAHRFRSDVQLVLCAGAADTPEVADEVRVAVAELARNRTGVFWIQDRLTIGQLREILSAATVFVCPSVYEPLGIVNLEAMACATAVVASDVGGIPEVVADGITGSLVHYDADDATGYQARLAEAVNALVADPATAERYGHAGRQRCIQEFSWAYIAEQTLDIYRKVCA.

This sequence belongs to the glycosyltransferase group 1 family.

It carries out the reaction ADP-alpha-D-glucose + alpha-D-glucose 1-phosphate = alpha-maltose 1-phosphate + ADP + H(+). It functions in the pathway capsule biogenesis; capsule polysaccharide biosynthesis. The protein operates within glycan biosynthesis; glycogen biosynthesis. Functionally, involved in the biosynthesis of the maltose-1-phosphate (M1P) building block required for alpha-glucan production by the key enzyme GlgE. Catalyzes the formation of an alpha-1,4 linkage between glucose from ADP-glucose and glucose 1-phosphate (G1P) to yield maltose-1-phosphate (M1P). In Mycobacterium tuberculosis (strain CDC 1551 / Oshkosh), this protein is Alpha-maltose-1-phosphate synthase.